Here is an 862-residue protein sequence, read N- to C-terminus: Transcription factor E2F7 (862 aa).

2 consecutive DNA-binding regions follow at residues 140 to 209 (RKQK…CWHG) and 279 to 364 (RKDK…KWIG). Disordered stretches follow at residues 561–592 (PGSD…DAPL), 617–643 (TPEQ…NVGE), and 788–862 (KADS…SAGN). Over residues 564–574 (DSPTLEETTMS) the composition is skewed to polar residues. Positions 575–590 (KQERPTKRQLNDKDDA) are enriched in basic and acidic residues. Composition is skewed to polar residues over residues 633–643 (EPVTKHSNVGE) and 832–851 (DVSS…SSAQ).

The protein belongs to the E2F/DP family. Homodimer and heterodimer: mainly forms homodimers and, to a lesser extent, heterodimers with e2f8.

Its subcellular location is the nucleus. In terms of biological role, atypical E2F transcription factor that participates in various processes such as angiogenesis and polyploidization of specialized cells. Mainly acts as a transcription repressor that binds DNA independently of DP proteins and specifically recognizes the E2 recognition site 5'-TTTC[CG]CGC-3'. Directly represses transcription of classical E2F transcription factors such as e2f1. Acts as a regulator of S-phase by recognizing and binding the E2-related site 5'-TTCCCGCC-3' and mediating repression of G1/S-regulated genes. Acts as a promoter of sprouting angiogenesis, possibly by acting as a transcription activator. The chain is Transcription factor E2F7 (e2f7) from Xenopus tropicalis (Western clawed frog).